A 132-amino-acid polypeptide reads, in one-letter code: AP-2 complex subunit sigma (132 aa).

Belongs to the adaptor complexes small subunit family. Adaptor protein complex 2 (AP-2) is a heterotetramer composed of two large adaptins (alpha-type and beta-type subunits), a medium adaptin (mu-type subunit AP50) and a small adaptin (sigma-type subunit AP17). In terms of tissue distribution, widely expressed in the embryo, endosperm, leaf and root.

Its subcellular location is the cell membrane. It localises to the membrane. It is found in the coated pit. In terms of biological role, component of the adaptor complexes which link clathrin to receptors in coated vesicles. Clathrin-associated protein complexes are believed to interact with the cytoplasmic tails of membrane proteins, leading to their selection and concentration. AP2S1/AP17 is a subunit of the plasma membrane adaptor. The complex binds polyphosphoinositides. The sequence is that of AP-2 complex subunit sigma (AP-17) from Zea mays (Maize).